The following is a 177-amino-acid chain: MAAEKVREIEVPQGVTVTVSGATLTTKGQKGQISREFRFPGISVRTDGGKVIVETGKDDKQTKATVGTYASHIKNMMTGVSEGYEYHMKIVYAHFPIQVKVEGKDKVTIGNFLGERKARTANIVGETKVTVQGDKVVLTGINKEDLGQTAANIEQACRIRKRDPRVFQDGIYITSKA.

It belongs to the universal ribosomal protein uL6 family. As to quaternary structure, part of the 50S ribosomal subunit.

Functionally, this protein binds to the 23S rRNA, and is important in its secondary structure. It is located near the subunit interface in the base of the L7/L12 stalk, and near the tRNA binding site of the peptidyltransferase center. The polypeptide is Large ribosomal subunit protein uL6 (Methanocella arvoryzae (strain DSM 22066 / NBRC 105507 / MRE50)).